The sequence spans 390 residues: O-phospho-L-seryl-tRNA:Cys-tRNA synthase 2 (390 aa).

Residues 83–84 (AR), N187, and 210–212 (SGH) each bind pyridoxal 5'-phosphate. K213 carries the post-translational modification N6-(pyridoxal phosphate)lysine.

It belongs to the SepCysS family. Homodimer. Interacts with SepRS. Requires pyridoxal 5'-phosphate as cofactor.

It catalyses the reaction O-phospho-L-seryl-tRNA(Cys) + hydrogen sulfide + H(+) = L-cysteinyl-tRNA(Cys) + phosphate. In terms of biological role, converts O-phospho-L-seryl-tRNA(Cys) (Sep-tRNA(Cys)) to L-cysteinyl-tRNA(Cys) (Cys-tRNA(Cys)). This chain is O-phospho-L-seryl-tRNA:Cys-tRNA synthase 2, found in Archaeoglobus fulgidus (strain ATCC 49558 / DSM 4304 / JCM 9628 / NBRC 100126 / VC-16).